The following is a 275-amino-acid chain: UPF0758 protein RL2068 (275 aa).

The tract at residues 1 to 45 (MAKGPVSTSSDDELPFETQEPIAADERSFFGGQPQKPSAPNARAA) is disordered. In terms of domain architecture, MPN spans 153 to 275 (VLSSWSSVIQ…HVSLKGLKLI (123 aa)). The Zn(2+) site is built by His-224, His-226, and Asp-237. The JAMM motif signature appears at 224-237 (HNHPSGDPTPSRAD).

It belongs to the UPF0758 family.

This Rhizobium johnstonii (strain DSM 114642 / LMG 32736 / 3841) (Rhizobium leguminosarum bv. viciae) protein is UPF0758 protein RL2068.